Here is a 607-residue protein sequence, read N- to C-terminus: Chaperone protein DnaK (607 aa).

At T174 the chain carries Phosphothreonine; by autocatalysis. The tract at residues 571-607 (AAMYQKQAQQQQPGPGPDAGKDKDDKDKTVDADYEVK) is disordered. Basic and acidic residues predominate over residues 589 to 607 (AGKDKDDKDKTVDADYEVK).

The protein belongs to the heat shock protein 70 family.

Functionally, acts as a chaperone. The polypeptide is Chaperone protein DnaK (Desulforudis audaxviator (strain MP104C)).